Reading from the N-terminus, the 435-residue chain is Chaperone SurA (435 aa).

An N-terminal signal peptide occupies residues 1 to 29; that stretch reads MINKTLHTKHTLLGLLAMAVLMIPVWSQA. PpiC domains follow at residues 180–281 and 290–390; these read QEDF…KMID and VTQY…RVDD.

The protein localises to the periplasm. It carries out the reaction [protein]-peptidylproline (omega=180) = [protein]-peptidylproline (omega=0). Functionally, chaperone involved in the correct folding and assembly of outer membrane proteins. Recognizes specific patterns of aromatic residues and the orientation of their side chains, which are found more frequently in integral outer membrane proteins. May act in both early periplasmic and late outer membrane-associated steps of protein maturation. The sequence is that of Chaperone SurA from Alcanivorax borkumensis (strain ATCC 700651 / DSM 11573 / NCIMB 13689 / SK2).